The primary structure comprises 688 residues: Protein sel-1 homolog 2 (688 aa).

The first 18 residues, 1–18 (MNPLALLVEILIIIEVTT), serve as a signal peptide directing secretion. The Extracellular segment spans residues 19 to 662 (KNSEAERYNR…KWKWLKLDST (644 aa)). An N-linked (GlcNAc...) asparagine glycan is attached at asparagine 34. 11 Sel1-like repeats span residues 107–142 (GDELFKMGNKILQESKSQKQKTEAYTFFTRAADMGN), 143–178 (LKAMEKMADALLFGSFGMQNITAAIQLYESLAKEGS), 179–214 (YKAQNALGFLSSYGIGMEYDQAKALIYYTFGSAGGS), 215–250 (MMSQMILGYRYLSGINVLQNCEVALNHYKKVADYIA), 297–333 (VQIQVSLGQLHLIGRKGLDQDYSKALYYFLKAAKAGS), 334–370 (ANAMAFIGKMYLEGNAAAPQNNATAFKYFSMAASKGN), 371–406 (AIGLHGLGLLYFHGKGVPVNYGEALKYFQKAAEKGW), 407–442 (PNAQFHLGFMYYSGSGVWKDYKLAFKYFYLASQSGQ), 443–478 (PLAIYYLAEMYATGTGVLRSCRTAVEPYKGVCELGH), 551–586 (AFARVKIGDYHYYGYGTKKDYETAATHYSIAADKHH), and 588–623 (AQAMFNLAYMYEHGLGIAQDIHLARRLYDMAAQTSP). Residue asparagine 162 is glycosylated (N-linked (GlcNAc...) asparagine). The chain crosses the membrane as a helical span at residues 663-683 (IGPYWDLLVIGLIVVVLIFLL). The Cytoplasmic portion of the chain corresponds to 684 to 688 (RNHHR).

It belongs to the sel-1 family.

It is found in the membrane. It localises to the cell projection. The protein resides in the cilium. The protein localises to the nucleus speckle. This chain is Protein sel-1 homolog 2 (Sel1l2), found in Rattus norvegicus (Rat).